A 343-amino-acid polypeptide reads, in one-letter code: MIKLSNITKVFHQGTRTIQALNNVSRHVPAGQIYGVIGASGAGKSTLIRCVNLLERPTEGSVLVDGQELTTLSESELTKARRQIGMIFQHFNLLSSRTVFGNVALPLELDNTPKDEIKRRVTELLSLVGLGDKHDSYPSNLSGGQKQRVAIARALASNPKVLLCDEATSALDPATTRSILELLKDINRRLGLTILLITHEMDVVKRICDCVAVISNGELIEQDTVSEVFSHPKTPLAQKFIQSTLHLDIPEDYQERLQTEPFTDCVPMLRLEFTGQSVDAPLLSETARRFNVNNNIISAQMDYAGGVKFGIMLTEMHGTQQDTQAAIAWLQEHHVKVEVLGYV.

The region spanning 2-241 (IKLSNITKVF…PKTPLAQKFI (240 aa)) is the ABC transporter domain. 38–45 (GASGAGKS) serves as a coordination point for ATP.

Belongs to the ABC transporter superfamily. Methionine importer (TC 3.A.1.24) family. The complex is composed of two ATP-binding proteins (MetN), two transmembrane proteins (MetI) and a solute-binding protein (MetQ).

It is found in the cell inner membrane. It carries out the reaction L-methionine(out) + ATP + H2O = L-methionine(in) + ADP + phosphate + H(+). The catalysed reaction is D-methionine(out) + ATP + H2O = D-methionine(in) + ADP + phosphate + H(+). Functionally, part of the ABC transporter complex MetNIQ involved in methionine import. Responsible for energy coupling to the transport system. In Shigella flexneri serotype 5b (strain 8401), this protein is Methionine import ATP-binding protein MetN.